The primary structure comprises 113 residues: Cholecystoxin (113 aa).

The N-terminal stretch at 1–20 (MYGGICLCVLLAVLAISSSG) is a signal peptide. The propeptide occupies 21–79 (QHISRSLNGNSLAAAIEQNFPEKHRPARTPDSNQRVESNIDEKANLGVLLARYLQKARR). Residues 77 to 97 (ARRGTNGKPPDPKKESQDYLG) are disordered. Tyrosine 95 carries the post-translational modification Sulfotyrosine. Phenylalanine amide is present on phenylalanine 101. Positions 102–113 (GRRSAEEYEYSS) are excised as a propeptide.

The protein belongs to the gastrin/cholecystokinin family. Expressed by the mandibular venom gland.

It localises to the secreted. Functionally, cholecystokinin-22: hypotensive neuropeptide that binds cholecystokinin receptor type A receptor (CCKAR). Cholecystokinin-8: hypotensive neuropeptide that binds cholecystokinin receptor type A receptor (CCKAR). This is Cholecystoxin from Varanus varius (Lace monitor lizard).